Consider the following 256-residue polypeptide: Bialaphos biosynthetic pathway regulatory protein (256 aa).

Positions 184 to 249 (ETADAIDVSD…QLGARAAECR (66 aa)) constitute an HTH luxR-type domain. A DNA-binding region (H-T-H motif) is located at residues 208–227 (DVAMARSLGISTRTLRRVIT).

Its function is as follows. Involved in the regulation of the biosynthesis of phosphinothricin tripeptide (PTT), also known as bialaphos (BA), a natural-product antibiotic and potent herbicide. This chain is Bialaphos biosynthetic pathway regulatory protein (brpA), found in Streptomyces hygroscopicus.